A 396-amino-acid chain; its full sequence is Glyceraldehyde-3-phosphate dehydrogenase GAPA1, chloroplastic (396 aa).

The N-terminal 60 residues, 1–60 (MASVTFSVPKGFTEFSGLRSSSASLPFGKKLSSDEFVSIVSFQTSAMGSSGGYRKGVTEA), are a transit peptide targeting the chloroplast. Residues 71-72 (RI), Asp95, and Arg140 each bind NADP(+). D-glyceraldehyde 3-phosphate is bound by residues 212 to 214 (SCT), Thr243, Arg258, 271 to 272 (TG), and Arg294. Residue Cys213 is the Nucleophile of the active site. Asn376 provides a ligand contact to NADP(+).

This sequence belongs to the glyceraldehyde-3-phosphate dehydrogenase family. As to quaternary structure, tetramer of either four A chains (GAPDH 2) or two A and two B chains (GAPDH 1). As to expression, expressed in leaves and stems.

It is found in the plastid. The protein resides in the chloroplast membrane. The protein localises to the chloroplast stroma. It carries out the reaction D-glyceraldehyde 3-phosphate + phosphate + NADP(+) = (2R)-3-phospho-glyceroyl phosphate + NADPH + H(+). It participates in carbohydrate biosynthesis; Calvin cycle. Involved in the photosynthetic reductive pentose phosphate pathway (Calvin-Benson cycle). Catalyzes the reduction of 1,3-diphosphoglycerate by NADPH. This Arabidopsis thaliana (Mouse-ear cress) protein is Glyceraldehyde-3-phosphate dehydrogenase GAPA1, chloroplastic (GAPA1).